We begin with the raw amino-acid sequence, 151 residues long: Transcriptional repressor NrdR (151 aa).

Residues 3–34 fold into a zinc finger; it reads CPYCGYIEDRVIDSRPTDEGSAIRRRRECSKC. The region spanning 49–139 is the ATP-cone domain; it reads IMVIKKDKSR…VYRQFKDINT (91 aa).

It belongs to the NrdR family. Zn(2+) serves as cofactor.

Negatively regulates transcription of bacterial ribonucleotide reductase nrd genes and operons by binding to NrdR-boxes. The polypeptide is Transcriptional repressor NrdR (Acetivibrio thermocellus (strain ATCC 27405 / DSM 1237 / JCM 9322 / NBRC 103400 / NCIMB 10682 / NRRL B-4536 / VPI 7372) (Clostridium thermocellum)).